Here is a 234-residue protein sequence, read N- to C-terminus: Carbohydrate deacetylase (234 aa).

The Mg(2+) site is built by His60 and His123.

It belongs to the YdjC deacetylase family. It depends on Mg(2+) as a cofactor.

Its function is as follows. Probably catalyzes the deacetylation of acetylated carbohydrates an important step in the degradation of oligosaccharides. This chain is Carbohydrate deacetylase, found in Bacillus anthracis.